The chain runs to 696 residues: Neurogenic protein big brain (696 aa).

At 1–71 (MADESLHTVP…LEFWRSIISE (71 aa)) the chain is on the cytoplasmic side. Ser-46 bears the Phosphoserine mark. Thr-47 carries the phosphothreonine modification. The chain crosses the membrane as a helical span at residues 72–93 (CLASFMYVFIVCGAAAGVGVGA). Residues 94–97 (SVSS) are Extracellular-facing. Residues 98 to 118 (VLLATALASGLAMATLTQCFL) traverse the membrane as a helical segment. Residues 119-143 (HISGAHINPAVTLALCVVRSISPIR) are Cytoplasmic-facing. Positions 126–128 (NPA) match the NPA 1 motif. A helical transmembrane segment spans residues 144–167 (AAMYITAQCGGGIAGAALLYGVTV). Over 168-189 (PGYQGNLQAAISHSAALAAWER) the chain is Extracellular. Residues 190-208 (FGVEFILTFLVVLCYFVST) form a helical membrane-spanning segment. Residues 209–213 (DPMKK) lie on the Cytoplasmic side of the membrane. The helical transmembrane segment at 214 to 234 (FMGNSAASIGCAYSACCFVSM) threads the bilayer. Topologically, residues 235 to 256 (PYLNPARSLGPSFVLNKWDSHW) are extracellular. The NPA 2 motif lies at 238-240 (NPA). Residues 257-273 (VYWFGPLVGGMASGLVY) form a helical membrane-spanning segment. Tyr-273 is subject to Phosphotyrosine; by Src. The Cytoplasmic segment spans residues 274 to 696 (EYIFNSRNRN…HYGMLPLRPN (423 aa)). Phosphoserine is present on Ser-300. Residues 314 to 345 (NKYQQSQGTYPRGQSNGNGGGQAAGNGQHQAA) are disordered. Tyr-367 carries the post-translational modification Phosphotyrosine; by Abl. Tyr-384 is subject to Phosphotyrosine; by Src. A Phosphoserine modification is found at Ser-394. Disordered stretches follow at residues 436 to 634 (MRTQ…KVSA) and 650 to 696 (TSQG…LRPN). Low complexity-rich tracts occupy residues 439 to 451 (QQQQQQQQQQQQQ) and 462 to 472 (QNQNVQNQMQQ). Tyr-478 carries the post-translational modification Phosphotyrosine; by Src. Residues 487-532 (QQQPIQQQQQQQQQQQLQQQQPNMGVQQQQMQPPPQMMSDPQQQPQ) are compositionally biased toward low complexity. Over residues 549 to 558 (GNHKYDRRDP) the composition is skewed to basic and acidic residues. The residue at position 576 (Ser-576) is a Phosphoserine. The span at 576 to 587 (SDDSSYGSYHGS) shows a compositional bias: low complexity. The span at 599 to 616 (EPSPPPPPMLMYAPPPQP) shows a compositional bias: pro residues. A Phosphotyrosine; by Abl modification is found at Tyr-610. Over residues 659-686 (QQQQQQQQQQQQQQQQQQQQMMMQQQQQ) the composition is skewed to low complexity.

This sequence belongs to the MIP/aquaporin (TC 1.A.8) family. Phosphorylated at its C-terminus. In terms of tissue distribution, detected in all tissues with neurogenic abilities, for example the neurogenic ectoderm.

It is found in the membrane. In terms of biological role, essential for proper differentiation of ectoderm. Acts synergistically with neurogenic locus proteins Notch and Delta during the separation of neural and epidermal cell lineages in response to the lateral inhibition signal. Voltage-insensitive monovalent cation channel. Ion transport is blocked by the presence of divalent cations. This is Neurogenic protein big brain (bib) from Drosophila melanogaster (Fruit fly).